Reading from the N-terminus, the 301-residue chain is Ribosomal RNA small subunit methyltransferase H (301 aa).

S-adenosyl-L-methionine-binding positions include 31–33 (GGY), aspartate 49, phenylalanine 76, aspartate 97, and glutamine 104.

Belongs to the methyltransferase superfamily. RsmH family.

It localises to the cytoplasm. It carries out the reaction cytidine(1402) in 16S rRNA + S-adenosyl-L-methionine = N(4)-methylcytidine(1402) in 16S rRNA + S-adenosyl-L-homocysteine + H(+). Functionally, specifically methylates the N4 position of cytidine in position 1402 (C1402) of 16S rRNA. This chain is Ribosomal RNA small subunit methyltransferase H, found in Ehrlichia ruminantium (strain Welgevonden).